We begin with the raw amino-acid sequence, 266 residues long: Shikimate dehydrogenase (NADP(+)) (266 aa).

Residues 16 to 18 and Thr-65 each bind shikimate; that span reads SKS. The active-site Proton acceptor is Lys-69. Residues Asn-90 and Asp-105 each contribute to the shikimate site. Residues 128 to 132 and Leu-211 each bind NADP(+); that span reads GAGGS. Shikimate is bound at residue Tyr-213. Gly-233 serves as a coordination point for NADP(+).

It belongs to the shikimate dehydrogenase family. In terms of assembly, homodimer.

It catalyses the reaction shikimate + NADP(+) = 3-dehydroshikimate + NADPH + H(+). It participates in metabolic intermediate biosynthesis; chorismate biosynthesis; chorismate from D-erythrose 4-phosphate and phosphoenolpyruvate: step 4/7. Involved in the biosynthesis of the chorismate, which leads to the biosynthesis of aromatic amino acids. Catalyzes the reversible NADPH linked reduction of 3-dehydroshikimate (DHSA) to yield shikimate (SA). In Helicobacter pylori (strain J99 / ATCC 700824) (Campylobacter pylori J99), this protein is Shikimate dehydrogenase (NADP(+)).